The primary structure comprises 274 residues: Ribosomal RNA small subunit methyltransferase A (274 aa).

S-adenosyl-L-methionine contacts are provided by Asn26, Leu28, Gly53, Glu74, Asp94, and Asn114.

Belongs to the class I-like SAM-binding methyltransferase superfamily. rRNA adenine N(6)-methyltransferase family. RsmA subfamily.

Its subcellular location is the cytoplasm. The catalysed reaction is adenosine(1518)/adenosine(1519) in 16S rRNA + 4 S-adenosyl-L-methionine = N(6)-dimethyladenosine(1518)/N(6)-dimethyladenosine(1519) in 16S rRNA + 4 S-adenosyl-L-homocysteine + 4 H(+). Its function is as follows. Specifically dimethylates two adjacent adenosines (A1518 and A1519) in the loop of a conserved hairpin near the 3'-end of 16S rRNA in the 30S particle. May play a critical role in biogenesis of 30S subunits. In Bdellovibrio bacteriovorus (strain ATCC 15356 / DSM 50701 / NCIMB 9529 / HD100), this protein is Ribosomal RNA small subunit methyltransferase A.